The primary structure comprises 185 residues: MKTAQELRVGNVIMVGKDPLVVQKTEYNKSGRNAAVVKLKFKNLLTGSGSESVYKADEKFDVVVLERKECTYSYFGDPMYVFMDEEYNQYEIEADSMGDALNYLEEAMPVEVVFYDGRAISVELPTILVREITYTEPAVRGDTSGKVLKPAKINTGFELSVPLFCAIGDKIEIDTRTNEYRSRVN.

Belongs to the elongation factor P family.

The protein resides in the cytoplasm. It functions in the pathway protein biosynthesis; polypeptide chain elongation. Its function is as follows. Involved in peptide bond synthesis. Stimulates efficient translation and peptide-bond synthesis on native or reconstituted 70S ribosomes in vitro. Probably functions indirectly by altering the affinity of the ribosome for aminoacyl-tRNA, thus increasing their reactivity as acceptors for peptidyl transferase. This Bordetella bronchiseptica (strain ATCC BAA-588 / NCTC 13252 / RB50) (Alcaligenes bronchisepticus) protein is Elongation factor P.